A 401-amino-acid chain; its full sequence is Bifunctional D-cysteine desulfhydrase/1-aminocyclopropane-1-carboxylate deaminase, mitochondrial (401 aa).

The transit peptide at 1–37 (MRGRSLTLSRVKLELARRSMSATSVPSMADFLTKKPY) directs the protein to the mitochondrion. R2 carries the N-acetylserine modification. The residue at position 93 (K93) is an N6-(pyridoxal phosphate)lysine. The active-site Nucleophile is S120.

This sequence belongs to the ACC deaminase/D-cysteine desulfhydrase family. Pyridoxal 5'-phosphate serves as cofactor. Highly expressed in stems and cauline leaves, and at lower levels in roots, rosette leaves and flowers.

It is found in the mitochondrion. The enzyme catalyses D-cysteine + H2O = hydrogen sulfide + pyruvate + NH4(+) + H(+). It carries out the reaction 1-aminocyclopropane-1-carboxylate + H2O = 2-oxobutanoate + NH4(+). Functionally, catalyzes the production of hydrogen sulfide (H2S) from cysteine. Is mainly responsible for the degradation of cysteine to generate H2S, a regulator of stomatal movement and closure. Has high affinity for D-cysteine. Its function is as follows. Possesses 1-aminocyclopropane-1-carboxylic acid (ACC) deaminase activity. Acts as a regulator of ACC levels and causes changes in ethylene levels. The polypeptide is Bifunctional D-cysteine desulfhydrase/1-aminocyclopropane-1-carboxylate deaminase, mitochondrial (DCD) (Arabidopsis thaliana (Mouse-ear cress)).